The primary structure comprises 155 residues: Effector protein PevD1 (155 aa).

An N-terminal signal peptide occupies residues 1-18 (MQFTLAAAAALFGASALA). One can recognise an AA1-like domain in the interval 33 to 148 (NMYENIDIAD…NPTTIVIDSL (116 aa)). 2 disulfide bridges follow: C70–C84 and C125–C135.

In terms of assembly, monomer. Interacts with Arabidopsis thaliana NRP.

It localises to the secreted. Effector protein. Elicits a hypersensitive response (HR) in tobacco plants (N.tabacum) and cotton (G.hirsutum). Boosts systemic acquired resistance (SAR) to tobacco mosaic virus (TMV) infection in N.tabacum and to V.dhaliae infection in primed cotton seedlings. In Verticillium dahliae (Verticillium wilt), this protein is Effector protein PevD1.